The sequence spans 631 residues: Phosphomethylpyrimidine synthase (631 aa).

Substrate contacts are provided by residues Asn-239, Met-268, Tyr-297, His-333, 353 to 355 (SRG), 394 to 397 (DGLR), and Glu-433. His-437 is a binding site for Zn(2+). A substrate-binding site is contributed by Tyr-460. Position 501 (His-501) interacts with Zn(2+). [4Fe-4S] cluster contacts are provided by Cys-581, Cys-584, and Cys-589.

It belongs to the ThiC family. Homodimer. [4Fe-4S] cluster serves as cofactor.

The catalysed reaction is 5-amino-1-(5-phospho-beta-D-ribosyl)imidazole + S-adenosyl-L-methionine = 4-amino-2-methyl-5-(phosphooxymethyl)pyrimidine + CO + 5'-deoxyadenosine + formate + L-methionine + 3 H(+). It participates in cofactor biosynthesis; thiamine diphosphate biosynthesis. Functionally, catalyzes the synthesis of the hydroxymethylpyrimidine phosphate (HMP-P) moiety of thiamine from aminoimidazole ribotide (AIR) in a radical S-adenosyl-L-methionine (SAM)-dependent reaction. This Salmonella gallinarum (strain 287/91 / NCTC 13346) protein is Phosphomethylpyrimidine synthase.